Consider the following 404-residue polypeptide: MKPKHILLAYSGGLDTSTALHFLKRHFDCRVTAYCANLGQKEDWERMKRRAAIAGADELVIEDLRETFIGDFVFPALKANASYERDYLLGTPLARPAIVKGLIEYARKHDVDCLSHGCTQKGNDQVRFEMAAKILAPDLPTVAPWRIWSLQSREDLFAYCQQHGIPVESRPDNLLSHDENLVHITTEGDYLESVANAFDWRDANWITPPTQAPDAIETITLGFRRGVPVSVDGAALGPVELVERLNEAGARNGVGFQDIIENRINGLKVRGVFENPALTILHAAHRKLEKITLGRDVERLRNLVSDDYGDIVYRGLWFSDERLCLQALIDESQKYVSGDVKVQLYKGSCTPCAVESEQSLYSRELVTLHAGRAISGEDATGFLNTLGLRIGIEAARAGNTGAGA.

ATP-binding positions include 9–17 (AYSGGLDTS) and Ala-36. Tyr-87 is a binding site for L-citrulline. Gly-117 serves as a coordination point for ATP. 3 residues coordinate L-aspartate: Thr-119, Asn-123, and Asp-124. Asn-123 provides a ligand contact to L-citrulline. Arg-127, Ser-176, and Glu-261 together coordinate L-citrulline.

Belongs to the argininosuccinate synthase family. Type 1 subfamily. In terms of assembly, homotetramer.

The protein resides in the cytoplasm. It catalyses the reaction L-citrulline + L-aspartate + ATP = 2-(N(omega)-L-arginino)succinate + AMP + diphosphate + H(+). It functions in the pathway amino-acid biosynthesis; L-arginine biosynthesis; L-arginine from L-ornithine and carbamoyl phosphate: step 2/3. The polypeptide is Argininosuccinate synthase (Burkholderia pseudomallei (strain K96243)).